A 140-amino-acid chain; its full sequence is Coiled-coil domain-containing protein 126 (140 aa).

The first 26 residues, 1–26 (MFFTISRKNMSQKLSLLLLVFGLIWG), serve as a signal peptide directing secretion. 2 N-linked (GlcNAc...) asparagine glycosylation sites follow: asparagine 110 and asparagine 134. The segment at 120 to 140 (TSGNLVPVTTNKRTNVSGSIR) is disordered.

The protein resides in the secreted. In Homo sapiens (Human), this protein is Coiled-coil domain-containing protein 126 (CCDC126).